The primary structure comprises 82 residues: Small ribosomal subunit protein bS20 (82 aa).

This sequence belongs to the bacterial ribosomal protein bS20 family.

Binds directly to 16S ribosomal RNA. The chain is Small ribosomal subunit protein bS20 from Streptococcus pyogenes serotype M12 (strain MGAS2096).